We begin with the raw amino-acid sequence, 120 residues long: Aspartate 1-decarboxylase (120 aa).

Catalysis depends on serine 25, which acts as the Schiff-base intermediate with substrate; via pyruvic acid. Residue serine 25 is modified to Pyruvic acid (Ser). Threonine 57 serves as a coordination point for substrate. Tyrosine 58 acts as the Proton donor in catalysis. Glycine 73–alanine 75 contributes to the substrate binding site.

It belongs to the PanD family. As to quaternary structure, heterooctamer of four alpha and four beta subunits. The cofactor is pyruvate. In terms of processing, is synthesized initially as an inactive proenzyme, which is activated by self-cleavage at a specific serine bond to produce a beta-subunit with a hydroxyl group at its C-terminus and an alpha-subunit with a pyruvoyl group at its N-terminus.

The protein localises to the cytoplasm. It catalyses the reaction L-aspartate + H(+) = beta-alanine + CO2. It functions in the pathway cofactor biosynthesis; (R)-pantothenate biosynthesis; beta-alanine from L-aspartate: step 1/1. Catalyzes the pyruvoyl-dependent decarboxylation of aspartate to produce beta-alanine. This Cupriavidus taiwanensis (strain DSM 17343 / BCRC 17206 / CCUG 44338 / CIP 107171 / LMG 19424 / R1) (Ralstonia taiwanensis (strain LMG 19424)) protein is Aspartate 1-decarboxylase.